The following is a 281-amino-acid chain: Undecaprenyl-diphosphatase (281 aa).

7 helical membrane passes run 4-24, 46-63, 83-103, 108-128, 187-207, 222-242, and 257-277; these read ILLL…FLPI, AFEV…CWEF, FVLN…LFGK, VLFS…IIFW, AVAT…ATAY, EFTL…FVCV, and FAWY…TGLI.

It belongs to the UppP family.

The protein localises to the cell inner membrane. The catalysed reaction is di-trans,octa-cis-undecaprenyl diphosphate + H2O = di-trans,octa-cis-undecaprenyl phosphate + phosphate + H(+). Catalyzes the dephosphorylation of undecaprenyl diphosphate (UPP). Confers resistance to bacitracin. The protein is Undecaprenyl-diphosphatase of Polynucleobacter necessarius subsp. necessarius (strain STIR1).